The sequence spans 181 residues: ATP-dependent protease subunit HslV (181 aa).

Thr-7 is a catalytic residue. Ala-166, Cys-169, and Thr-172 together coordinate Na(+).

It belongs to the peptidase T1B family. HslV subfamily. In terms of assembly, a double ring-shaped homohexamer of HslV is capped on each side by a ring-shaped HslU homohexamer. The assembly of the HslU/HslV complex is dependent on binding of ATP.

It localises to the cytoplasm. It catalyses the reaction ATP-dependent cleavage of peptide bonds with broad specificity.. With respect to regulation, allosterically activated by HslU binding. Its function is as follows. Protease subunit of a proteasome-like degradation complex believed to be a general protein degrading machinery. The protein is ATP-dependent protease subunit HslV of Anaeromyxobacter dehalogenans (strain 2CP-C).